A 263-amino-acid chain; its full sequence is Pheophorbidase (263 aa).

Positions 13–244 constitute an AB hydrolase-1 domain; sequence HFVFVHGASH…LEESDHSAFF (232 aa). Ser-88 serves as the catalytic Acyl-ester intermediate. Residues Asp-212 and His-240 each act as charge relay system in the active site.

This sequence belongs to the AB hydrolase superfamily. As to quaternary structure, homodimer.

It is found in the cytoplasm. The catalysed reaction is pheophorbide a + H2O + H(+) = pyropheophorbide a + methanol + CO2. With respect to regulation, inhibited by methanol and phenylmethylsulfonicfluoride (PMSF). In terms of biological role, involved in chlorophyll degradation. Specific for the pheophorbides of the dihydroporphyrin and tetrahydroporphyrin types. Chlorophyllide a, pheophytin a and the nonfluorescent chlorophyll catabolite (NCC) are not used as substrates. The polypeptide is Pheophorbidase (PPD) (Raphanus sativus (Radish)).